A 973-amino-acid polypeptide reads, in one-letter code: Coatomer subunit beta (973 aa).

HEAT repeat units lie at residues 98-133 (HEMILVCNAIQHDLQHPNEYIRGNTLRFLTKLREAE) and 134-170 (LLEQMVPSVLACLEYRHAYVRKYAILAVFSIFKVSEH). Ser181 carries the post-translational modification Phosphoserine. HEAT repeat units follow at residues 279–317 (NVLVPAVNKLIDLAVKVSDNNIKLIVLDRIQDINANNVG) and 318–354 (ALEELTLDILRVLNAEDLDVRSKALDISMDLATSRNA). Ser540 carries the phosphoserine modification.

As to quaternary structure, oligomeric complex that consists of at least the alpha, beta, beta', gamma, delta, epsilon and zeta subunits. The complex interacts with ARF1 and PAB1. The N-terminus is blocked.

It is found in the cytoplasm. The protein resides in the golgi apparatus membrane. Its subcellular location is the cytoplasmic vesicle. The protein localises to the COPI-coated vesicle membrane. Functionally, the coatomer is a cytosolic protein complex that binds to dilysine motifs and reversibly associates with Golgi non-clathrin-coated vesicles, which further mediate biosynthetic protein transport from the ER, via the Golgi up to the trans Golgi network. Coatomer complex is required for budding from Golgi membranes, and is essential for the retrograde Golgi-to-ER transport of dilysine-tagged proteins. Required for mitochondrial morphology. The protein is Coatomer subunit beta (SEC26) of Saccharomyces cerevisiae (strain ATCC 204508 / S288c) (Baker's yeast).